The primary structure comprises 121 residues: Large ribosomal subunit protein uL18 (121 aa).

The protein belongs to the universal ribosomal protein uL18 family. In terms of assembly, part of the 50S ribosomal subunit; part of the 5S rRNA/L5/L18/L25 subcomplex. Contacts the 5S and 23S rRNAs.

Its function is as follows. This is one of the proteins that bind and probably mediate the attachment of the 5S RNA into the large ribosomal subunit, where it forms part of the central protuberance. In Ehrlichia canis (strain Jake), this protein is Large ribosomal subunit protein uL18.